The chain runs to 267 residues: Dihydropteroate synthase (267 aa).

The Pterin-binding domain occupies 1–251 (MTKTKIMGIL…NVELNAKLAK (251 aa)). N11 provides a ligand contact to Mg(2+). (7,8-dihydropterin-6-yl)methyl diphosphate is bound by residues T51, D84, N103, D167, K203, and 239-241 (RVH).

This sequence belongs to the DHPS family. In terms of assembly, homodimer. Requires Mg(2+) as cofactor.

It catalyses the reaction (7,8-dihydropterin-6-yl)methyl diphosphate + 4-aminobenzoate = 7,8-dihydropteroate + diphosphate. Its pathway is cofactor biosynthesis; tetrahydrofolate biosynthesis; 7,8-dihydrofolate from 2-amino-4-hydroxy-6-hydroxymethyl-7,8-dihydropteridine diphosphate and 4-aminobenzoate: step 1/2. In terms of biological role, catalyzes the condensation of para-aminobenzoate (pABA) with 6-hydroxymethyl-7,8-dihydropterin diphosphate (DHPt-PP) to form 7,8-dihydropteroate (H2Pte), the immediate precursor of folate derivatives. The polypeptide is Dihydropteroate synthase (folP) (Staphylococcus aureus (strain MW2)).